Here is a 1123-residue protein sequence, read N- to C-terminus: Phytochrome A (1123 aa).

Over residues 1–14 (MSSSRPSQSSTTSS) the composition is skewed to low complexity. Residues 1–20 (MSSSRPSQSSTTSSRSKHSA) are disordered. Positions 218-401 (SMERLCDTMV…VFAILVNKEL (184 aa)) constitute a GAF domain. Cys323 lines the phytochromobilin pocket. The PAS 1 domain maps to 617–687 (VTAEMVRLIE…KMLELALQGQ (71 aa)). The PAC domain occupies 690 to 746 (RNVEFEIKTHGPSRDSSPISLIVNACASKDVRDSVVGVCFIAQDITGQKSIMDKFTR). The PAS 2 domain occupies 747-821 (IEGDYRAIIQ…KNQEAFVNFG (75 aa)). Positions 901 to 1118 (YIRRQIRNPL…TFIISVELAV (218 aa)) constitute a Histidine kinase domain.

This sequence belongs to the phytochrome family. In terms of assembly, homodimer. In terms of processing, contains one covalently linked phytochromobilin chromophore.

Functionally, regulatory photoreceptor which exists in two forms that are reversibly interconvertible by light: the Pr form that absorbs maximally in the red region of the spectrum and the Pfr form that absorbs maximally in the far-red region. Photoconversion of Pr to Pfr induces an array of morphogenic responses, whereas reconversion of Pfr to Pr cancels the induction of those responses. Pfr controls the expression of a number of nuclear genes including those encoding the small subunit of ribulose-bisphosphate carboxylase, chlorophyll A/B binding protein, protochlorophyllide reductase, rRNA, etc. It also controls the expression of its own gene(s) in a negative feedback fashion. This is Phytochrome A (PHYA) from Solanum tuberosum (Potato).